The primary structure comprises 395 residues: Nitrite extrusion protein (395 aa).

The next 12 helical transmembrane spans lie at 15–35 (SLVA…QITL), 44–64 (ISLV…PLGY), 73–93 (LMFM…SIAD), 96–116 (FDLI…SIGV), 133–153 (GIYG…PVIA), 160–180 (STVQ…VLFG), 203–223 (VLWF…AFTI), 240–262 (AGLR…GFLA), 271–291 (LMFV…SPTI), 293–313 (LYTF…GTVF), 330–350 (IVSA…ASVF), and 357–377 (AIGF…VIWM).

The protein belongs to the major facilitator superfamily. Nitrate/nitrite porter (TC 2.A.1.8) family.

The protein localises to the cell membrane. Functionally, involved in excretion of nitrite produced by the dissimilatory reduction of nitrate. This is Nitrite extrusion protein (narK) from Bacillus subtilis (strain 168).